A 181-amino-acid polypeptide reads, in one-letter code: UPF0301 protein COXBURSA331_A2219 (181 aa).

The protein belongs to the UPF0301 (AlgH) family.

The sequence is that of UPF0301 protein COXBURSA331_A2219 from Coxiella burnetii (strain RSA 331 / Henzerling II).